Reading from the N-terminus, the 101-residue chain is Protein RnfH (101 aa).

It belongs to the UPF0125 (RnfH) family.

This is Protein RnfH from Coxiella burnetii (strain RSA 331 / Henzerling II).